The primary structure comprises 372 residues: Chaperone protein DnaJ (372 aa).

Positions 5 to 70 (DYYEVLGVSK…QKRAAYDQYG (66 aa)) constitute a J domain. The CR-type zinc finger occupies 127–205 (GVTKEIRIPT…CHGHGRVERY (79 aa)). Residues C140, C143, C157, C160, C179, C182, C193, and C196 each contribute to the Zn(2+) site. 4 CXXCXGXG motif repeats span residues 140–147 (CDICHGSG), 157–164 (CSTCQGAG), 179–186 (CPHCHGRG), and 193–200 (CHKCHGHG).

Belongs to the DnaJ family. Homodimer. It depends on Zn(2+) as a cofactor.

The protein resides in the cytoplasm. Participates actively in the response to hyperosmotic and heat shock by preventing the aggregation of stress-denatured proteins and by disaggregating proteins, also in an autonomous, DnaK-independent fashion. Unfolded proteins bind initially to DnaJ; upon interaction with the DnaJ-bound protein, DnaK hydrolyzes its bound ATP, resulting in the formation of a stable complex. GrpE releases ADP from DnaK; ATP binding to DnaK triggers the release of the substrate protein, thus completing the reaction cycle. Several rounds of ATP-dependent interactions between DnaJ, DnaK and GrpE are required for fully efficient folding. Also involved, together with DnaK and GrpE, in the DNA replication of plasmids through activation of initiation proteins. The sequence is that of Chaperone protein DnaJ from Photorhabdus laumondii subsp. laumondii (strain DSM 15139 / CIP 105565 / TT01) (Photorhabdus luminescens subsp. laumondii).